A 353-amino-acid chain; its full sequence is Phosphoribosylformylglycinamidine cyclo-ligase (353 aa).

Belongs to the AIR synthase family.

It is found in the cytoplasm. The catalysed reaction is 2-formamido-N(1)-(5-O-phospho-beta-D-ribosyl)acetamidine + ATP = 5-amino-1-(5-phospho-beta-D-ribosyl)imidazole + ADP + phosphate + H(+). It participates in purine metabolism; IMP biosynthesis via de novo pathway; 5-amino-1-(5-phospho-D-ribosyl)imidazole from N(2)-formyl-N(1)-(5-phospho-D-ribosyl)glycinamide: step 2/2. This chain is Phosphoribosylformylglycinamidine cyclo-ligase, found in Dinoroseobacter shibae (strain DSM 16493 / NCIMB 14021 / DFL 12).